The sequence spans 88 residues: Beta-insect excitatory toxin LqhIT1d (88 aa).

Residues 1–18 form the signal peptide; that stretch reads MKFFLLFLVVLPIMGVLG. The LCN-type CS-alpha/beta domain maps to 20–83; the sequence is KNGFAVDSNG…ISDTRKKLCD (64 aa). Disulfide bonds link Cys-34-Cys-55, Cys-40-Cys-60, Cys-44-Cys-62, and Cys-56-Cys-82.

This sequence belongs to the long (4 C-C) scorpion toxin superfamily. Sodium channel inhibitor family. Beta subfamily. As to expression, expressed by the venom gland.

The protein localises to the secreted. In terms of biological role, excitatory insect toxins induce a spastic paralysis. They bind voltage-independently at site-4 of sodium channels (Nav) and shift the voltage of activation toward more negative potentials thereby affecting sodium channel activation and promoting spontaneous and repetitive firing. In Leiurus hebraeus (Hebrew deathstalker scorpion), this protein is Beta-insect excitatory toxin LqhIT1d.